Consider the following 230-residue polypeptide: Complex I assembly factor TMEM126B, mitochondrial (230 aa).

Phosphoserine is present on serine 34. The next 4 helical transmembrane spans lie at 72-92 (IYQMATFGTTAGFSGIFSNFL), 110-130 (LATLPFLSTVVTDKLFVIDAL), 141-161 (VFRSSLIGIVCGVFYPSSLAF), and 199-219 (IPLVFQIMFGILNGLYHYAVF).

The protein belongs to the TMEM126 family. As to quaternary structure, part of the mitochondrial complex I assembly/MCIA complex that comprises at least the core subunits TMEM126B, NDUFAF1, ECSIT and ACAD9 and complement subunits such as COA1 and TMEM186. Associates with the intermediate 370 kDa subcomplex of incompletely assembled complex I. Interacts with TMEM70.

It is found in the mitochondrion membrane. Functionally, as part of the MCIA complex, involved in the assembly of the mitochondrial complex I. Participates in constructing the membrane arm of complex I. This chain is Complex I assembly factor TMEM126B, mitochondrial, found in Homo sapiens (Human).